Consider the following 268-residue polypeptide: Thymidylate synthase (268 aa).

Residue R27 coordinates dUMP. H57 lines the (6R)-5,10-methylene-5,6,7,8-tetrahydrofolate pocket. Position 132-133 (132-133) interacts with dUMP; it reads RR. Catalysis depends on C152, which acts as the Nucleophile. DUMP-binding positions include 172-175, N183, and 213-215; these read RSAD and HVY. D175 provides a ligand contact to (6R)-5,10-methylene-5,6,7,8-tetrahydrofolate. A267 contributes to the (6R)-5,10-methylene-5,6,7,8-tetrahydrofolate binding site.

It belongs to the thymidylate synthase family. Bacterial-type ThyA subfamily. Homodimer.

It localises to the cytoplasm. The catalysed reaction is dUMP + (6R)-5,10-methylene-5,6,7,8-tetrahydrofolate = 7,8-dihydrofolate + dTMP. It participates in pyrimidine metabolism; dTTP biosynthesis. In terms of biological role, catalyzes the reductive methylation of 2'-deoxyuridine-5'-monophosphate (dUMP) to 2'-deoxythymidine-5'-monophosphate (dTMP) while utilizing 5,10-methylenetetrahydrofolate (mTHF) as the methyl donor and reductant in the reaction, yielding dihydrofolate (DHF) as a by-product. This enzymatic reaction provides an intracellular de novo source of dTMP, an essential precursor for DNA biosynthesis. This is Thymidylate synthase from Kineococcus radiotolerans (strain ATCC BAA-149 / DSM 14245 / SRS30216).